The primary structure comprises 159 residues: MSYSCSTRNCSSRRIGGEYAVPVVTVSSPEADCLSGIYLPSSFQTGSWLLDHCQETCCEPTVCQSTCYQPTPCVSSPVQVTSRQTTCVSSPCSTTCSRPLTFISSGCQPLSGVSTVCKPVRSISTVCQPVGGVSTICQPTCGVSRTYQQSCVSSCRRIC.

4 consecutive repeat copies span residues 107-116 (CQPLSGVSTV), 117-126 (CKPVRSISTV), 127-136 (CQPVGGVSTI), and 137-146 (CQPTCGVSRT). The segment at 107 to 146 (CQPLSGVSTVCKPVRSISTVCQPVGGVSTICQPTCGVSRT) is 4 X 10 AA approximate repeats.

This sequence belongs to the PMG family. Wool.

In the wool cortex, wool keratin intermediate filaments are embedded in an interfilamentous matrix, consisting of wool keratin-associated proteins (KRTAP), which are essential for the formation of a rigid and resistant wool shaft through their extensive disulfide bond cross-linking with abundant cysteine residues of wool keratins. The matrix proteins include the high-sulfur and high-glycine-tyrosine keratins. This chain is Keratin-associated protein 11-1 (KRTAP11-1), found in Capra hircus (Goat).